A 456-amino-acid chain; its full sequence is Carnosine N-methyltransferase unmet (456 aa).

S-adenosyl-L-methionine-binding residues include arginine 154, glycine 195, glutamate 216, aspartate 282, phenylalanine 283, and cysteine 299. Carnosine is bound by residues aspartate 303, histidine 334, and tyrosine 385. Residues 402–418 show a composition bias toward basic and acidic residues; sequence RGKRKASREPHDLIVRE. The interval 402–456 is disordered; it reads RGKRKASREPHDLIVREDSEEEGEQQPERNETEEKQQLKPLATANCETEIKEQPS. Phosphoserine is present on residues serine 408 and serine 420. Positions 427-438 are enriched in basic and acidic residues; that stretch reads QPERNETEEKQQ.

It belongs to the carnosine N-methyltransferase family. In terms of assembly, associates with the GATOR2 complex; the interaction is probably direct and is inhibited by S-adenosyl-L-methionine binding. Associates with the GATOR1 complex; the interaction is probably indirect and mediated by the GATOR2 complex.

The enzyme catalyses carnosine + S-adenosyl-L-methionine = anserine + S-adenosyl-L-homocysteine + H(+). S-adenosyl-L-methionine-binding protein that acts as a sensor to signal methionine availability to the mTORC1 signaling pathway. Associates with the GATOR2 complex in the absence of methionine to inhibit mTORC1 signaling, but dissociates in the presence of the methionine derivative S-adenosyl-L-methionine; S-adenosyl-L-homocysteine binding does not induce dissociation. Required for mTORC1 pathway response to methionine starvation. Exerts a protective function on developing egg chambers by inhibiting mTORC1 signaling under starvation conditions. May also function as a N-methyltransferase that mediates the formation of anserine (beta-alanyl-N(Pi)-methyl-L-histidine) from carnosine. It is unclear whether this protein has retained N-methyltransferase activity or if it is an evolutionary intermediate whose substrate binding ability has been co-opted to function as a nutrient sensor for mTORC1 signaling. The polypeptide is Carnosine N-methyltransferase unmet (Drosophila melanogaster (Fruit fly)).